Reading from the N-terminus, the 439-residue chain is uncharacterized protein (439 aa).

28 to 35 is an ATP binding site; that stretch reads GRRRIGKT.

This is an uncharacterized protein from Methanocaldococcus jannaschii (strain ATCC 43067 / DSM 2661 / JAL-1 / JCM 10045 / NBRC 100440) (Methanococcus jannaschii).